Consider the following 497-residue polypeptide: Histone-lysine N-methyltransferase ASHR3 (497 aa).

Residues 118-186 (MVDCLVCHKP…QWRCVKCPMA (69 aa)) form a PHD-type zinc finger. The AWS domain occupies 283 to 326 (DGVGCTNCGPNCDRSCVCRVQCISCSKGCSCPESCGNRPFRKEK). An SET domain is found at 326–443 (KKIKIVKTEH…AGEPLTYDYR (118 aa)). Positions 449–465 (PEVKCNCGSENCQGYLG) constitute a Post-SET domain.

This sequence belongs to the class V-like SAM-binding methyltransferase superfamily. Histone-lysine methyltransferase family. SET2 subfamily. In terms of assembly, interacts with AMS/bHLH21 by its SET domain and PHD finger. Expressed in roots, flowers and buds, the anther and in stamen filaments.

It localises to the nucleus. It is found in the chromosome. The enzyme catalyses L-lysyl-[histone] + S-adenosyl-L-methionine = N(6)-methyl-L-lysyl-[histone] + S-adenosyl-L-homocysteine + H(+). In terms of biological role, histone methyltransferase. Involved in stamen development. The protein is Histone-lysine N-methyltransferase ASHR3 (ASHR3) of Arabidopsis thaliana (Mouse-ear cress).